Reading from the N-terminus, the 1806-residue chain is Focadhesin (1806 aa).

The interval 733 to 760 is disordered; it reads ARPIPKQPEVEDEVKQNEEENEEEEDIS.

The protein resides in the cell junction. It localises to the focal adhesion. It is found in the cytoplasm. The protein localises to the cytosol. Its function is as follows. Required for the maintenance of SKIC2 and SKIC3 proteostatic levels in the liver. May be involved in the regulation of RNA degradation by the exosome complex. The protein is Focadhesin (focad) of Danio rerio (Zebrafish).